Reading from the N-terminus, the 591-residue chain is Aspartate--tRNA(Asp/Asn) ligase (591 aa).

Glutamate 176 contacts L-aspartate. An aspartate region spans residues 200-203; sequence QLFK. Arginine 222 contributes to the L-aspartate binding site. Residues 222–224 and glutamine 231 contribute to the ATP site; that span reads RDE. Histidine 450 serves as a coordination point for L-aspartate. Glutamate 484 lines the ATP pocket. Residue arginine 491 participates in L-aspartate binding. 536–539 contributes to the ATP binding site; it reads GLDR.

Belongs to the class-II aminoacyl-tRNA synthetase family. Type 1 subfamily. Homodimer.

Its subcellular location is the cytoplasm. It catalyses the reaction tRNA(Asx) + L-aspartate + ATP = L-aspartyl-tRNA(Asx) + AMP + diphosphate. In terms of biological role, aspartyl-tRNA synthetase with relaxed tRNA specificity since it is able to aspartylate not only its cognate tRNA(Asp) but also tRNA(Asn). Reaction proceeds in two steps: L-aspartate is first activated by ATP to form Asp-AMP and then transferred to the acceptor end of tRNA(Asp/Asn). This Bacillus cereus (strain ATCC 14579 / DSM 31 / CCUG 7414 / JCM 2152 / NBRC 15305 / NCIMB 9373 / NCTC 2599 / NRRL B-3711) protein is Aspartate--tRNA(Asp/Asn) ligase.